The chain runs to 466 residues: Asparagine--tRNA ligase (466 aa).

This sequence belongs to the class-II aminoacyl-tRNA synthetase family. In terms of assembly, homodimer.

Its subcellular location is the cytoplasm. It catalyses the reaction tRNA(Asn) + L-asparagine + ATP = L-asparaginyl-tRNA(Asn) + AMP + diphosphate + H(+). The protein is Asparagine--tRNA ligase of Yersinia pseudotuberculosis serotype O:1b (strain IP 31758).